The primary structure comprises 224 residues: Rhodanese-like domain-containing protein 14, chloroplastic (224 aa).

A chloroplast-targeting transit peptide spans 1-48 (MASLTSIATPYPSSSQALRLKSSGNTLFSAGVRSAAMVSGHKTLKIQC). A Rhodanese domain is found at 87-220 (KENNFVILDV…WGKEGLPVET (134 aa)). The active-site Cysteine persulfide intermediate is cysteine 166.

It is found in the plastid. Its subcellular location is the chloroplast. This chain is Rhodanese-like domain-containing protein 14, chloroplastic, found in Arabidopsis thaliana (Mouse-ear cress).